The chain runs to 688 residues: Polyribonucleotide nucleotidyltransferase (688 aa).

Residues Asp484 and Asp490 each contribute to the Mg(2+) site. Residues Pro550–Ile609 form the KH domain. Positions Asp626–Ala688 constitute an S1 motif domain.

Belongs to the polyribonucleotide nucleotidyltransferase family. It depends on Mg(2+) as a cofactor.

Its subcellular location is the cytoplasm. It catalyses the reaction RNA(n+1) + phosphate = RNA(n) + a ribonucleoside 5'-diphosphate. In terms of biological role, involved in mRNA degradation. Catalyzes the phosphorolysis of single-stranded polyribonucleotides processively in the 3'- to 5'-direction. The polypeptide is Polyribonucleotide nucleotidyltransferase (Helicobacter pylori (strain Shi470)).